The following is a 513-amino-acid chain: Probable G-protein coupled receptor Mth-like 9 (513 aa).

The first 19 residues, 1 to 19, serve as a signal peptide directing secretion; it reads MVSPLIILLIIWLSVGAKS. The Extracellular segment spans residues 20 to 207; sequence VEIASINHPC…NCERFQTGYR (188 aa). Intrachain disulfides connect Cys29–Cys82, Cys84–Cys89, Cys93–Cys181, and Cys94–Cys107. N-linked (GlcNAc...) asparagine glycosylation occurs at Asn36. Residues Asn106, Asn125, and Asn165 are each glycosylated (N-linked (GlcNAc...) asparagine). The helical transmembrane segment at 208–228 threads the bilayer; sequence VWIYAICSIIAIIINIFILSL. The Cytoplasmic portion of the chain corresponds to 229–242; the sequence is LGSVRDARKSHYGQ. Residues 243-263 form a helical membrane-spanning segment; it reads LIIYYLLSMIVGYSLLVYLAL. The Extracellular portion of the chain corresponds to 264–276; the sequence is KNPMKLSHVACRN. A helical membrane pass occupies residues 277–297; it reads IGFLAYFCIMLSFVFLAICSL. The Cytoplasmic portion of the chain corresponds to 298–314; sequence DFLLKFKQKAVRSSVRR. The helical transmembrane segment at 315 to 335 threads the bilayer; sequence LSLALAVLAVIGLRFLVSLAQ. Topologically, residues 336–360 are extracellular; it reads DSKLPKHFKPGMGEDYCWFDVRTWG. A helical membrane pass occupies residues 361-381; sequence ILIYYYGPIALLLIFSIVCCL. Topologically, residues 382–403 are cytoplasmic; that stretch reads KAYFSIYELPPDTQYILGTQLK. Residues 404-424 traverse the membrane as a helical segment; the sequence is IVKTHFYAFSAYIVGVFAVWI. The Extracellular segment spans residues 425–438; the sequence is REIVVYIMARVREH. The chain crosses the membrane as a helical span at residues 439–459; it reads FFIIDFWSGICILGLAIAGFI. Residues 460–513 are Cytoplasmic-facing; the sequence is LLLGKNLHVKSWWAINVESSQTDLSIINARVYKFDEKGDLKSSDSPYKPTVTSL.

The protein belongs to the G-protein coupled receptor 2 family. Mth subfamily.

It is found in the cell membrane. The polypeptide is Probable G-protein coupled receptor Mth-like 9 (mthl9) (Drosophila melanogaster (Fruit fly)).